Reading from the N-terminus, the 70-residue chain is Large ribosomal subunit protein bL31 (70 aa).

Zn(2+) contacts are provided by Cys16, Cys18, Cys37, and Cys40.

The protein belongs to the bacterial ribosomal protein bL31 family. Type A subfamily. Part of the 50S ribosomal subunit. It depends on Zn(2+) as a cofactor.

Binds the 23S rRNA. This is Large ribosomal subunit protein bL31 from Shewanella woodyi (strain ATCC 51908 / MS32).